Reading from the N-terminus, the 405-residue chain is MAKEKFERTKEHVNVGTIGHVDHGKSTLTSAITCVLAAGLVEGGKAKCFKYEEIDKAPEEKERGITINITHVEYETAKRHYAHVDCPGHADYIKNMITGAAQMDGAILVVSAADGPMPQTREHVLLARQVNVPYIVVFMNKCDMVDDEELLELVELEVRELLSKYEYPGDEVPVIRGSALGALQELEQNSPGKWVGSIKELLNAMDEYIPTPEREVDKPFLMPIEDVFSISGRGTVVTGRVERGVLRPGDEVEIVGLREEPLKTVATSIEMFRKVLDEALPGDNIGVLLRGVGKDDVERGQVLAQPGSVKAHRKFRAQVYVLSKEEGGRHTPFFVNYRPQFYFRTADVTGTVVKLPEGVEMVMPGDNVELEVELIAPVALEEGLRFAIREGGRTVGAGVVTKILD.

The tr-type G domain maps to 10-213 (KEHVNVGTIG…AMDEYIPTPE (204 aa)). The segment at 19 to 26 (GHVDHGKS) is G1. 19-26 (GHVDHGKS) contacts GTP. Serine 26 serves as a coordination point for Mg(2+). The tract at residues 64–68 (GITIN) is G2. The G3 stretch occupies residues 85-88 (DCPG). Residues 85-89 (DCPGH) and 140-143 (NKCD) each bind GTP. The segment at 140 to 143 (NKCD) is G4. Positions 178–180 (SAL) are G5.

Belongs to the TRAFAC class translation factor GTPase superfamily. Classic translation factor GTPase family. EF-Tu/EF-1A subfamily. In terms of assembly, monomer.

It is found in the cytoplasm. It catalyses the reaction GTP + H2O = GDP + phosphate + H(+). Functionally, GTP hydrolase that promotes the GTP-dependent binding of aminoacyl-tRNA to the A-site of ribosomes during protein biosynthesis. The chain is Elongation factor Tu from Aquifex pyrophilus.